A 99-amino-acid chain; its full sequence is Plastocyanin (99 aa).

A Plastocyanin-like domain is found at 1 to 99 (LDVLLGSDDG…AGMVGKVTVN (99 aa)). The Cu cation site is built by histidine 37, cysteine 84, histidine 87, and methionine 92.

The protein belongs to the plastocyanin family. Cu(2+) is required as a cofactor.

The protein resides in the plastid. It localises to the chloroplast thylakoid membrane. Its function is as follows. Participates in electron transfer between P700 and the cytochrome b6-f complex in photosystem I. The sequence is that of Plastocyanin (PETE) from Mercurialis perennis (Dog's mercury).